Here is a 611-residue protein sequence, read N- to C-terminus: Mitogen-activated protein kinase 10 (611 aa).

The region spanning Y25–F316 is the Protein kinase domain. ATP contacts are provided by residues I31 to V39 and K54. Catalysis depends on D151, which acts as the Proton acceptor. T187 is subject to Phosphothreonine. The TXY motif lies at T187 to Y189. A Phosphotyrosine modification is found at Y189. Residues E394–E481 are disordered. The segment covering E426–D439 has biased composition (basic and acidic residues).

This sequence belongs to the protein kinase superfamily. CMGC Ser/Thr protein kinase family. MAP kinase subfamily. In terms of processing, dually phosphorylated on Thr-187 and Tyr-189, which activates the enzyme.

It catalyses the reaction L-seryl-[protein] + ATP = O-phospho-L-seryl-[protein] + ADP + H(+). The enzyme catalyses L-threonyl-[protein] + ATP = O-phospho-L-threonyl-[protein] + ADP + H(+). Its activity is regulated as follows. Activated by threonine and tyrosine phosphorylation. The chain is Mitogen-activated protein kinase 10 (MPK10) from Oryza sativa subsp. japonica (Rice).